Reading from the N-terminus, the 158-residue chain is NAD(P)H-quinone oxidoreductase subunit J, chloroplastic (158 aa).

It belongs to the complex I 30 kDa subunit family. In terms of assembly, NDH is composed of at least 16 different subunits, 5 of which are encoded in the nucleus.

The protein resides in the plastid. It localises to the chloroplast thylakoid membrane. The enzyme catalyses a plastoquinone + NADH + (n+1) H(+)(in) = a plastoquinol + NAD(+) + n H(+)(out). It catalyses the reaction a plastoquinone + NADPH + (n+1) H(+)(in) = a plastoquinol + NADP(+) + n H(+)(out). Its function is as follows. NDH shuttles electrons from NAD(P)H:plastoquinone, via FMN and iron-sulfur (Fe-S) centers, to quinones in the photosynthetic chain and possibly in a chloroplast respiratory chain. The immediate electron acceptor for the enzyme in this species is believed to be plastoquinone. Couples the redox reaction to proton translocation, and thus conserves the redox energy in a proton gradient. The chain is NAD(P)H-quinone oxidoreductase subunit J, chloroplastic from Arabis hirsuta (Hairy rock-cress).